The chain runs to 193 residues: Molybdenum cofactor guanylyltransferase (193 aa).

Residues 8–10 (LAG), lysine 21, aspartate 67, and aspartate 98 each bind GTP. Aspartate 98 contacts Mg(2+).

This sequence belongs to the MobA family. As to quaternary structure, monomer. Mg(2+) serves as cofactor.

It is found in the cytoplasm. The catalysed reaction is Mo-molybdopterin + GTP + H(+) = Mo-molybdopterin guanine dinucleotide + diphosphate. Transfers a GMP moiety from GTP to Mo-molybdopterin (Mo-MPT) cofactor (Moco or molybdenum cofactor) to form Mo-molybdopterin guanine dinucleotide (Mo-MGD) cofactor. The protein is Molybdenum cofactor guanylyltransferase of Cereibacter sphaeroides (strain ATCC 17023 / DSM 158 / JCM 6121 / CCUG 31486 / LMG 2827 / NBRC 12203 / NCIMB 8253 / ATH 2.4.1.) (Rhodobacter sphaeroides).